The sequence spans 396 residues: Lipid-A-disaccharide synthase (396 aa).

It belongs to the LpxB family.

The enzyme catalyses a lipid X + a UDP-2-N,3-O-bis[(3R)-3-hydroxyacyl]-alpha-D-glucosamine = a lipid A disaccharide + UDP + H(+). The protein operates within bacterial outer membrane biogenesis; LPS lipid A biosynthesis. Condensation of UDP-2,3-diacylglucosamine and 2,3-diacylglucosamine-1-phosphate to form lipid A disaccharide, a precursor of lipid A, a phosphorylated glycolipid that anchors the lipopolysaccharide to the outer membrane of the cell. The sequence is that of Lipid-A-disaccharide synthase from Acinetobacter baylyi (strain ATCC 33305 / BD413 / ADP1).